The primary structure comprises 535 residues: Atrial natriuretic peptide receptor 3 (535 aa).

Positions 1 to 26 are cleaved as a signal peptide; sequence MRSLLLFTFSACVLLARALLAGGASS. The propeptide occupies 27–40; it reads GGGDTGPGNRRRER. Residues 41–477 lie on the Extracellular side of the membrane; the sequence is EALAAQKIEV…CKSCGLEESA (437 aa). N-linked (GlcNAc...) asparagine glycosylation occurs at Asn-81. 2 disulfide bridges follow: Cys-103–Cys-131 and Cys-208–Cys-256. N-linked (GlcNAc...) asparagine glycosylation is found at Asn-288 and Asn-389. A helical transmembrane segment spans residues 478–498; it reads VTGIVVGALLGAGLLMAFYFF. At 499 to 535 the chain is on the cytoplasmic side; it reads RKKYRITIERRNHQEESNIGKHRELREDSIRSHFSVA.

Belongs to the ANF receptor family. As to quaternary structure, homodimer; disulfide-linked. Interacts with OSTN.

Its subcellular location is the cell membrane. Receptor for the natriuretic peptide hormones, binding with similar affinities atrial natriuretic peptide NPPA/ANP, brain natriuretic peptide NPPB/BNP, and C-type natriuretic peptide NPPC/CNP. May function as a clearance receptor for NPPA, NPPB and NPPC, regulating their local concentrations and effects. Acts as a regulator of osteoblast differentiation and bone growth by binding to its ligand osteocrin, thereby preventing binding between NPR3/NPR-C and natriuretic peptides, leading to increase cGMP production. In Rattus norvegicus (Rat), this protein is Atrial natriuretic peptide receptor 3 (Npr3).